Reading from the N-terminus, the 600-residue chain is Glutamine--fructose-6-phosphate aminotransferase [isomerizing] (600 aa).

Cysteine 2 serves as the catalytic Nucleophile; for GATase activity. The Glutamine amidotransferase type-2 domain occupies 2 to 217 (CGIVGYIGQL…DKEMVIVTDK (216 aa)). SIS domains are found at residues 283-422 (ISNA…SRGK) and 452-590 (IARE…VDKP). Lysine 595 functions as the For Fru-6P isomerization activity in the catalytic mechanism.

In terms of assembly, homodimer.

The protein resides in the cytoplasm. It carries out the reaction D-fructose 6-phosphate + L-glutamine = D-glucosamine 6-phosphate + L-glutamate. Functionally, catalyzes the first step in hexosamine metabolism, converting fructose-6P into glucosamine-6P using glutamine as a nitrogen source. This chain is Glutamine--fructose-6-phosphate aminotransferase [isomerizing], found in Bacillus licheniformis (strain ATCC 14580 / DSM 13 / JCM 2505 / CCUG 7422 / NBRC 12200 / NCIMB 9375 / NCTC 10341 / NRRL NRS-1264 / Gibson 46).